The sequence spans 128 residues: Probable 4-amino-4-deoxy-L-arabinose-phosphoundecaprenol flippase subunit ArnF (128 aa).

A helical membrane pass occupies residues 1-21 (MGLMWGLFSVIIASAAQLSLG). Residues 22 to 35 (YAASHLPPMTQFWD) lie on the Periplasmic side of the membrane. A helical transmembrane segment spans residues 36-56 (FIAAFFAFGPGARMLVVGLVG). Residues 57–76 (YLLSVFCWYKALHQLALSKA) lie on the Cytoplasmic side of the membrane. A helical transmembrane segment spans residues 77–97 (YALLSMSYVLVWIASMVLPGW). At 98–100 (EGT) the chain is on the periplasmic side. The helical transmembrane segment at 101–121 (FSLKALLGVACIMSGLMLIFL) threads the bilayer. The Cytoplasmic segment spans residues 122–128 (PTTKQRY).

This sequence belongs to the ArnF family. Heterodimer of ArnE and ArnF.

It is found in the cell inner membrane. Its pathway is bacterial outer membrane biogenesis; lipopolysaccharide biosynthesis. Functionally, translocates 4-amino-4-deoxy-L-arabinose-phosphoundecaprenol (alpha-L-Ara4N-phosphoundecaprenol) from the cytoplasmic to the periplasmic side of the inner membrane. In Escherichia fergusonii (strain ATCC 35469 / DSM 13698 / CCUG 18766 / IAM 14443 / JCM 21226 / LMG 7866 / NBRC 102419 / NCTC 12128 / CDC 0568-73), this protein is Probable 4-amino-4-deoxy-L-arabinose-phosphoundecaprenol flippase subunit ArnF.